The following is a 295-amino-acid chain: MKIAILSRNSKLYSTRRLIEAGRKRGHTVRILDPLRCYMRIAADGFSLHYKGKPITGFDAVIPRIGASVTRYGTAVLRQLEFMGTYTPNPSDAILRSRDKLRAHQLLAAQGIDMPVTVFGDNPDDTQDLLSMLGPPPHVVKLNEGAQGAGVILTEKASASRGVVEALRGLYANFIVQEFIGEAEGADLRCFVVGDKVVAAMRRQAAEGDFRSNLHLGGTAAVAEATEQEQEVAVRSARALGLAVAGVDLIRSRRGPLVLEVNSTPGLEGVEGVCGVDVAAAIVVHLEQSVRRSAG.

In terms of domain architecture, ATP-grasp spans His-104–Glu-287. ATP contacts are provided by residues Lys-141, Glu-178–Phe-179, Asp-187, and Arg-211–Asn-213. Positions 248, 260, and 262 each coordinate Mg(2+). Positions 248, 260, and 262 each coordinate Mn(2+).

It belongs to the RimK family. Mg(2+) is required as a cofactor. It depends on Mn(2+) as a cofactor.

This Xanthomonas axonopodis pv. citri (strain 306) protein is Probable alpha-L-glutamate ligase.